The following is a 544-amino-acid chain: Chromosomal replication initiator protein DnaA (544 aa).

The domain I, interacts with DnaA modulators stretch occupies residues 1–71 (MNDFWQHCSA…ADMARDFWHT (71 aa)). The domain II stretch occupies residues 71–207 (TPIDVQFVLD…GETDSMYERS (137 aa)). A compositionally biased stretch (low complexity) spans 90-105 (AAAPAPASARPASAPG). Disordered stretches follow at residues 90 to 111 (AAAPAPASARPASAPGSMGGSA) and 180 to 203 (AAARRTWRPGQSAGSNGNGETDSM). Residues 191 to 200 (SAGSNGNGET) are compositionally biased toward polar residues. Positions 208 to 424 (KLNPVLTFDN…GALRKILAYS (217 aa)) are domain III, AAA+ region. Positions 252, 254, 255, and 256 each coordinate ATP. Residues 425–544 (KFHGREITIE…LHVLEQTLKG (120 aa)) form a domain IV, binds dsDNA region.

Belongs to the DnaA family. Oligomerizes as a right-handed, spiral filament on DNA at oriC.

The protein localises to the cytoplasm. Functionally, plays an essential role in the initiation and regulation of chromosomal replication. ATP-DnaA binds to the origin of replication (oriC) to initiate formation of the DNA replication initiation complex once per cell cycle. Binds the DnaA box (a 9 base pair repeat at the origin) and separates the double-stranded (ds)DNA. Forms a right-handed helical filament on oriC DNA; dsDNA binds to the exterior of the filament while single-stranded (ss)DNA is stabiized in the filament's interior. The ATP-DnaA-oriC complex binds and stabilizes one strand of the AT-rich DNA unwinding element (DUE), permitting loading of DNA polymerase. After initiation quickly degrades to an ADP-DnaA complex that is not apt for DNA replication. Binds acidic phospholipids. The polypeptide is Chromosomal replication initiator protein DnaA (Paraburkholderia xenovorans (strain LB400)).